Reading from the N-terminus, the 138-residue chain is 1,4-dihydroxy-2-naphthoyl-CoA hydrolase (138 aa).

Asp14 is a catalytic residue.

Belongs to the 4-hydroxybenzoyl-CoA thioesterase family. DHNA-CoA hydrolase subfamily.

The catalysed reaction is 1,4-dihydroxy-2-naphthoyl-CoA + H2O = 1,4-dihydroxy-2-naphthoate + CoA + H(+). It participates in cofactor biosynthesis; phylloquinone biosynthesis. Its pathway is quinol/quinone metabolism; 1,4-dihydroxy-2-naphthoate biosynthesis; 1,4-dihydroxy-2-naphthoate from chorismate: step 7/7. In terms of biological role, catalyzes the hydrolysis of 1,4-dihydroxy-2-naphthoyl-CoA (DHNA-CoA) to 1,4-dihydroxy-2-naphthoate (DHNA), a reaction involved in phylloquinone (vitamin K1) biosynthesis. The polypeptide is 1,4-dihydroxy-2-naphthoyl-CoA hydrolase (Rippkaea orientalis (strain PCC 8801 / RF-1) (Cyanothece sp. (strain PCC 8801))).